The chain runs to 473 residues: Bifunctional protein GlmU (473 aa).

The segment at 1 to 241 is pyrophosphorylase; it reads MATQPTPLTA…VGSLVGINDR (241 aa). Residues 13–16, lysine 27, glutamine 84, and 89–90 each bind UDP-N-acetyl-alpha-D-glucosamine; these read LAAG and GT. Aspartate 114 lines the Mg(2+) pocket. UDP-N-acetyl-alpha-D-glucosamine is bound by residues glycine 152, glutamate 167, asparagine 182, and asparagine 239. Asparagine 239 provides a ligand contact to Mg(2+). A linker region spans residues 242-262; the sequence is AQLAAAEEVLYGRIADRLRKS. The segment at 263–473 is N-acetyltransferase; the sequence is GVTIRTSARI…KARLKDAAKK (211 aa). Positions 343 and 361 each coordinate UDP-N-acetyl-alpha-D-glucosamine. The active-site Proton acceptor is the histidine 373. Residues tyrosine 376 and asparagine 387 each coordinate UDP-N-acetyl-alpha-D-glucosamine. Residues alanine 390, 396 to 397, serine 415, threonine 433, and arginine 450 each bind acetyl-CoA; that span reads NY.

The protein in the N-terminal section; belongs to the N-acetylglucosamine-1-phosphate uridyltransferase family. It in the C-terminal section; belongs to the transferase hexapeptide repeat family. Homotrimer. Requires Mg(2+) as cofactor.

It localises to the cytoplasm. The catalysed reaction is alpha-D-glucosamine 1-phosphate + acetyl-CoA = N-acetyl-alpha-D-glucosamine 1-phosphate + CoA + H(+). It carries out the reaction N-acetyl-alpha-D-glucosamine 1-phosphate + UTP + H(+) = UDP-N-acetyl-alpha-D-glucosamine + diphosphate. It participates in nucleotide-sugar biosynthesis; UDP-N-acetyl-alpha-D-glucosamine biosynthesis; N-acetyl-alpha-D-glucosamine 1-phosphate from alpha-D-glucosamine 6-phosphate (route II): step 2/2. Its pathway is nucleotide-sugar biosynthesis; UDP-N-acetyl-alpha-D-glucosamine biosynthesis; UDP-N-acetyl-alpha-D-glucosamine from N-acetyl-alpha-D-glucosamine 1-phosphate: step 1/1. The protein operates within bacterial outer membrane biogenesis; LPS lipid A biosynthesis. Its function is as follows. Catalyzes the last two sequential reactions in the de novo biosynthetic pathway for UDP-N-acetylglucosamine (UDP-GlcNAc). The C-terminal domain catalyzes the transfer of acetyl group from acetyl coenzyme A to glucosamine-1-phosphate (GlcN-1-P) to produce N-acetylglucosamine-1-phosphate (GlcNAc-1-P), which is converted into UDP-GlcNAc by the transfer of uridine 5-monophosphate (from uridine 5-triphosphate), a reaction catalyzed by the N-terminal domain. The polypeptide is Bifunctional protein GlmU (Sorangium cellulosum (strain So ce56) (Polyangium cellulosum (strain So ce56))).